A 488-amino-acid polypeptide reads, in one-letter code: Probable glycine dehydrogenase (decarboxylating) subunit 2 (488 aa).

An N6-(pyridoxal phosphate)lysine modification is found at Lys264.

It belongs to the GcvP family. C-terminal subunit subfamily. The glycine cleavage system is composed of four proteins: P, T, L and H. In this organism, the P 'protein' is a heterodimer of two subunits. The cofactor is pyridoxal 5'-phosphate.

The catalysed reaction is N(6)-[(R)-lipoyl]-L-lysyl-[glycine-cleavage complex H protein] + glycine + H(+) = N(6)-[(R)-S(8)-aminomethyldihydrolipoyl]-L-lysyl-[glycine-cleavage complex H protein] + CO2. Its function is as follows. The glycine cleavage system catalyzes the degradation of glycine. The P protein binds the alpha-amino group of glycine through its pyridoxal phosphate cofactor; CO(2) is released and the remaining methylamine moiety is then transferred to the lipoamide cofactor of the H protein. In Methylococcus capsulatus (strain ATCC 33009 / NCIMB 11132 / Bath), this protein is Probable glycine dehydrogenase (decarboxylating) subunit 2.